A 463-amino-acid polypeptide reads, in one-letter code: ATP synthase subunit beta (463 aa).

Residue 151-158 participates in ATP binding; sequence GGAGVGKT.

Belongs to the ATPase alpha/beta chains family. F-type ATPases have 2 components, CF(1) - the catalytic core - and CF(0) - the membrane proton channel. CF(1) has five subunits: alpha(3), beta(3), gamma(1), delta(1), epsilon(1). CF(0) has three main subunits: a(1), b(2) and c(9-12). The alpha and beta chains form an alternating ring which encloses part of the gamma chain. CF(1) is attached to CF(0) by a central stalk formed by the gamma and epsilon chains, while a peripheral stalk is formed by the delta and b chains.

The protein localises to the cell membrane. The catalysed reaction is ATP + H2O + 4 H(+)(in) = ADP + phosphate + 5 H(+)(out). In terms of biological role, produces ATP from ADP in the presence of a proton gradient across the membrane. The catalytic sites are hosted primarily by the beta subunits. This Clostridium botulinum (strain Okra / Type B1) protein is ATP synthase subunit beta.